A 213-amino-acid polypeptide reads, in one-letter code: Probable anti-sigma-F factor NrsF (213 aa).

6 consecutive transmembrane segments (helical) span residues 27–47 (ALAI…LLQV), 51–71 (LGLA…TCLA), 91–111 (VPAA…FTLI), 126–146 (TWKS…AAVL), 159–179 (LAGF…YCLH), and 187–207 (FIGF…VLLG).

The protein belongs to the NrsF anti-sigma-F factor family.

The protein resides in the cell inner membrane. In terms of biological role, probably an anti-sigma factor for extracytoplasmic function (ECF) sigma factor sigma-F (SigF), which responds to (hypo)chlorite. ECF sigma factors are held in an inactive form by a cognate anti-sigma factor. The polypeptide is Probable anti-sigma-F factor NrsF (Azospira oryzae (strain ATCC BAA-33 / DSM 13638 / PS) (Dechlorosoma suillum)).